The chain runs to 248 residues: Triosephosphate isomerase (248 aa).

Substrate is bound by residues Asn-11 and Lys-13. Catalysis depends on His-95, which acts as the Electrophile. The active-site Proton acceptor is Glu-165.

It belongs to the triosephosphate isomerase family. In terms of assembly, homodimer.

Its subcellular location is the cytoplasm. The catalysed reaction is D-glyceraldehyde 3-phosphate = dihydroxyacetone phosphate. It carries out the reaction dihydroxyacetone phosphate = methylglyoxal + phosphate. Its pathway is carbohydrate degradation; glycolysis; D-glyceraldehyde 3-phosphate from glycerone phosphate: step 1/1. It functions in the pathway carbohydrate biosynthesis; gluconeogenesis. Triosephosphate isomerase is an extremely efficient metabolic enzyme that catalyzes the interconversion between dihydroxyacetone phosphate (DHAP) and D-glyceraldehyde-3-phosphate (G3P) in glycolysis and gluconeogenesis. Functionally, it is also responsible for the non-negligible production of methylglyoxal a reactive cytotoxic side-product that modifies and can alter proteins, DNA and lipids. The sequence is that of Triosephosphate isomerase (tpi1) from Oryzias latipes (Japanese rice fish).